The sequence spans 1223 residues: Rho family-interacting cell polarization regulator 1 (1223 aa).

Serine 22 is modified (phosphoserine). Positions 89 to 114 form a coiled coil; that stretch reads LTAYLEVHQQEQEKLQGQIRESKRNS. Serine 349 and serine 351 each carry phosphoserine. Threonine 355 carries the phosphothreonine modification. The interval 375–411 is disordered; it reads NGTAWSLSSESSDDSSSPQLSGTARHSPAPRPLVQQP. Residues 380–395 are compositionally biased toward low complexity; that stretch reads SLSSESSDDSSSPQLS. Residues serine 456 and serine 459 each carry the phosphoserine modification. Disordered regions lie at residues 475–769 and 856–889; these read ESLA…APQH and FLNE…SPSA. 2 stretches are compositionally biased toward low complexity: residues 505 to 523 and 546 to 564; these read GHSA…PTST and PGPT…TTTH. Residues 565–592 are compositionally biased toward polar residues; it reads SAPSPLTHTTTGSTHKPIISTLTTTGPT. 2 stretches are compositionally biased toward low complexity: residues 601-650 and 659-675; these read TTTS…PTPS and TSPT…TTSP. A compositionally biased stretch (polar residues) spans 680-695; that stretch reads VSPSTSLELATLSSPS. Over residues 858-867 the composition is skewed to acidic residues; the sequence is NEDEDEDNDV. 2 positions are modified to phosphoserine: serine 874 and serine 875.

Belongs to the RIPOR family. In terms of assembly, interacts (via N-terminus) with RHOA (GTP-bound form); this interaction links active RHOA to STK24 and STK26 kinases. Interacts with RHOB. Interacts with RHOC. Interacts (via C-terminus) with PDCD10; this interaction occurs in a Rho-independent manner. Interacts (via C-terminus) with STK24; this interaction occurs in a PDCD10-dependent and Rho-independent manner. Interacts (via C-terminus) with STK26; this interaction occurs in a PDCD10-dependent and Rho-independent manner. Interacts (via N-terminus) with 14-3-3 proteins; these interactions occur in a Rho-dependent manner.

Its subcellular location is the cytoplasm. The protein resides in the golgi apparatus. In terms of biological role, downstream effector protein for Rho-type small GTPases that plays a role in cell polarity and directional migration. Acts as an adapter protein, linking active Rho proteins to STK24 and STK26 kinases, and hence positively regulates Golgi reorientation in polarized cell migration upon Rho activation. Involved in the subcellular relocation of STK26 from the Golgi to cytoplasm punctae in a Rho- and PDCD10-dependent manner upon serum stimulation. The polypeptide is Rho family-interacting cell polarization regulator 1 (RIPOR1) (Homo sapiens (Human)).